The primary structure comprises 117 residues: Large ribosomal subunit protein uL24 (117 aa).

This sequence belongs to the universal ribosomal protein uL24 family. Part of the 50S ribosomal subunit.

One of two assembly initiator proteins, it binds directly to the 5'-end of the 23S rRNA, where it nucleates assembly of the 50S subunit. In terms of biological role, one of the proteins that surrounds the polypeptide exit tunnel on the outside of the subunit. In Thermosynechococcus vestitus (strain NIES-2133 / IAM M-273 / BP-1), this protein is Large ribosomal subunit protein uL24.